Here is a 283-residue protein sequence, read N- to C-terminus: Co-chaperone protein DjlA (283 aa).

Over 1–6 the chain is Periplasmic; that stretch reads MQIFGK. Residues 7 to 30 form a helical membrane-spanning segment; it reads ILGGFFGFLFGGFFGAALGIFIGH. The Cytoplasmic portion of the chain corresponds to 31 to 283; it reads QFDKAKRMAN…DLIKKEKGIK (253 aa). Positions 188-197 are enriched in gly residues; the sequence is QGGGFSGHQS. Positions 188–210 are disordered; the sequence is QGGGFSGHQSGGSHQQGQWQQAS. Over residues 198 to 210 the composition is skewed to low complexity; it reads GGSHQQGQWQQAS. The J domain maps to 217–283; it reads DAYNLLGISE…DLIKKEKGIK (67 aa).

Homodimer.

The protein resides in the cell inner membrane. Regulatory DnaK co-chaperone. Direct interaction between DnaK and DjlA is needed for the induction of the wcaABCDE operon, involved in the synthesis of a colanic acid polysaccharide capsule, possibly through activation of the RcsB/RcsC phosphotransfer signaling pathway. The colanic acid capsule may help the bacterium survive conditions outside the host. This chain is Co-chaperone protein DjlA, found in Aliivibrio fischeri (strain ATCC 700601 / ES114) (Vibrio fischeri).